We begin with the raw amino-acid sequence, 473 residues long: Probable serine/threonine-protein kinase glkA (473 aa).

The tract at residues 1–84 is disordered; the sequence is MTIPTDNNSS…QSSSTATVNS (84 aa). Over residues 7-84 the composition is skewed to low complexity; that stretch reads NNSSNNKGYN…QSSSTATVNS (78 aa). The Protein kinase domain occupies 91–366; that stretch reads YEIIKQVGQG…IDEIIAHPFL (276 aa). ATP contacts are provided by residues 97-105 and Lys119; that span reads VGQGTFGKV. Asp208 serves as the catalytic Proton acceptor. Disordered stretches follow at residues 389–418 and 437–473; these read GKSSLTTNSTSSSSTTANMTSLASSSSNNK and SSNLKSIDNSNNGKSSSSSNNIPSLNNSNNGVITNTI. Low complexity predominate over residues 442 to 466; the sequence is SIDNSNNGKSSSSSNNIPSLNNSNN.

It belongs to the protein kinase superfamily. CMGC Ser/Thr protein kinase family. GSK-3 subfamily.

The catalysed reaction is L-seryl-[tau protein] + ATP = O-phospho-L-seryl-[tau protein] + ADP + H(+). The enzyme catalyses L-threonyl-[tau protein] + ATP = O-phospho-L-threonyl-[tau protein] + ADP + H(+). The chain is Probable serine/threonine-protein kinase glkA (glkA) from Dictyostelium discoideum (Social amoeba).